A 234-amino-acid polypeptide reads, in one-letter code: Bradykinin-releasing enzyme KR-E-1 (234 aa).

Residues 1-225 (VIGGDECNIN…YSDWIQSIIA (225 aa)) form the Peptidase S1 domain. 6 disulfides stabilise this stretch: cysteine 7/cysteine 139, cysteine 26/cysteine 42, cysteine 74/cysteine 232, cysteine 118/cysteine 186, cysteine 150/cysteine 165, and cysteine 176/cysteine 201. N-linked (GlcNAc...) asparagine glycosylation is present at asparagine 20. Catalysis depends on charge relay system residues histidine 41 and aspartate 86. The Charge relay system role is filled by serine 180.

This sequence belongs to the peptidase S1 family. Snake venom subfamily. Monomer. As to expression, expressed by the venom gland.

The protein resides in the secreted. In terms of biological role, bradykinin-releasing enzyme. Releases bradykinin from bovine HMW kininogen. Has anticoagulant activity. Increases permeability of capillaries by intradermal injection into rabbits. In Gloydius ussuriensis (Ussuri mamushi), this protein is Bradykinin-releasing enzyme KR-E-1.